Consider the following 166-residue polypeptide: MLSKNLLEALNDQMNHEYFAAHAYMAMAAYCDKESYEGFANFFIQQAKEERFHGQKIYNYINDRGAHAEFRAVSAPKIDFSSILETFKDSLSQEQEVTRRFYNLSEIARQDKDYATISFLNWFLDEQVEEEAMFETHINYLTRIGDDSNALYLYEKELGTRTFDEE.

Residues Leu-2–Gly-145 enclose the Ferritin-like diiron domain. Residues Glu-17, Glu-50, His-53, Glu-94, and Gln-127 each coordinate Fe cation.

This sequence belongs to the ferritin family. Prokaryotic subfamily.

The protein localises to the cytoplasm. The catalysed reaction is 4 Fe(2+) + O2 + 6 H2O = 4 iron(III) oxide-hydroxide + 12 H(+). Iron-storage protein. This is Bacterial non-heme ferritin (ftnA) from Staphylococcus aureus (strain MRSA252).